Consider the following 312-residue polypeptide: Olfactory receptor 13J1 (312 aa).

At 1 to 25 (MEPLNRTEVSEFFLKGFSGYPALEH) the chain is on the extracellular side. Asn-5 carries an N-linked (GlcNAc...) asparagine glycan. A helical membrane pass occupies residues 26–46 (LLFPLCSAMYLVTLLGNTAIM). The Cytoplasmic portion of the chain corresponds to 47–54 (AVSVLDIH). The chain crosses the membrane as a helical span at residues 55-75 (LHTPVYFFLGNLSTLDICYTP). Over 76–99 (TFVPLMLVHLLSSRKTISFAVCAI) the chain is Extracellular. An intrachain disulfide couples Cys-97 to Cys-189. Residues 100 to 120 (QMCLSLSTGSTECLLLAITAY) form a helical membrane-spanning segment. At 121–139 (DRYLAICQPLRYHVLMSHR) the chain is on the cytoplasmic side. Residues 140–160 (LCVLLMGAAWVLCLLKSVTEM) form a helical membrane-spanning segment. The Extracellular segment spans residues 161–197 (VISMRLPFCGHHVVSHFTCKILAVLKLACGNTSVSED). Asn-191 is a glycosylation site (N-linked (GlcNAc...) asparagine). The chain crosses the membrane as a helical span at residues 198–217 (FLLAGSILLLPVPLAFICLS). Over 218 to 237 (YLLILATILRVPSAARCCKA) the chain is Cytoplasmic. The helical transmembrane segment at 238–258 (FSTCLAHLAVVLLFYGTIIFM) threads the bilayer. Residues 259-271 (YLKPKSKEAHISD) are Extracellular-facing. The helical transmembrane segment at 272–292 (EVFTVLYAMVTTMLNPTIYSL) threads the bilayer. At 293–312 (RNKEVKEAARKVWGRSRASR) the chain is on the cytoplasmic side.

Belongs to the G-protein coupled receptor 1 family.

The protein localises to the cell membrane. Odorant receptor. This chain is Olfactory receptor 13J1 (OR13J1), found in Homo sapiens (Human).